Reading from the N-terminus, the 146-residue chain is Large ribosomal subunit protein uL24 (146 aa).

The interval 1–33 (MKYNPRVTSSRRRNRKPHFTASSSERRVXMSSP) is disordered. Residues 9–18 (SSRRRNRKPH) show a composition bias toward basic residues.

Belongs to the universal ribosomal protein uL24 family.

In Brassica campestris (Field mustard), this protein is Large ribosomal subunit protein uL24 (RPL26).